We begin with the raw amino-acid sequence, 322 residues long: Reticulocalbin-1 (322 aa).

The first 19 residues, 1-19, serve as a signal peptide directing secretion; that stretch reads MDVLGFICAVFLGTVVLHA. Asn-44 carries N-linked (GlcNAc...) asparagine glycosylation. 6 consecutive EF-hand domains span residues 70-105, 106-141, 157-192, 194-229, 235-270, and 271-306; these read ESKDRLSKIVDRIDGDGNSYITTDELKAWIKRVQKR, YVYENVVKVWADYDLNKDNKISWEEYKQATYGYYLS, KMLPRDERRFKRADLDGDSAANREEFTSFLHPEEFE, MKDIVVLETLEDIDKNSDGHVDEDEYIADMFAHEDR, WVKTEREQFSDFRDLNKDGKMDLDEIRHWIMPQDYD, and HAQAEARHLVYESDKDKDQMLTKEEILDNWNMFVGS. The Ca(2+) site is built by Asp-83, Asp-85, Asn-87, Tyr-89, Glu-94, Asp-119, Asn-121, Asp-123, Lys-125, Glu-130, Asp-170, Asp-172, Asp-174, Glu-181, Asp-207, Asn-209, Asp-211, His-213, Glu-218, Asp-248, Asn-250, Asp-252, Lys-254, Glu-259, Asp-284, Asp-286, Asp-288, Met-290, and Glu-295. Residues 319–322 carry the Prevents secretion from ER motif; the sequence is HDEL.

The protein belongs to the CREC family.

The protein resides in the endoplasmic reticulum lumen. May regulate calcium-dependent activities in the endoplasmic reticulum lumen or post-ER compartment. The protein is Reticulocalbin-1 (rcn1) of Takifugu rubripes (Japanese pufferfish).